The following is a 504-amino-acid chain: Glucose-6-phosphate isomerase (504 aa).

The Proton donor role is filled by Glu-333. Catalysis depends on residues His-364 and Lys-473.

The protein belongs to the GPI family.

Its subcellular location is the cytoplasm. The catalysed reaction is alpha-D-glucose 6-phosphate = beta-D-fructose 6-phosphate. Its pathway is carbohydrate biosynthesis; gluconeogenesis. It participates in carbohydrate degradation; glycolysis; D-glyceraldehyde 3-phosphate and glycerone phosphate from D-glucose: step 2/4. Functionally, catalyzes the reversible isomerization of glucose-6-phosphate to fructose-6-phosphate. The polypeptide is Glucose-6-phosphate isomerase (Stenotrophomonas maltophilia (strain R551-3)).